The chain runs to 635 residues: Threonine--tRNA ligase (635 aa).

The TGS domain occupies 1-58; the sequence is MIRVICNNETVELPKGATAADFASKIKNSHYFAGVVINDQIKDLSTTLNEGDTLRFVT. Positions 237-528 are catalytic; it reads DHRVLGAKLD…LIEHFKGKFP (292 aa). Cysteine 328, histidine 379, and histidine 505 together coordinate Zn(2+).

The protein belongs to the class-II aminoacyl-tRNA synthetase family. As to quaternary structure, homodimer. Zn(2+) is required as a cofactor.

The protein resides in the cytoplasm. It catalyses the reaction tRNA(Thr) + L-threonine + ATP = L-threonyl-tRNA(Thr) + AMP + diphosphate + H(+). Catalyzes the attachment of threonine to tRNA(Thr) in a two-step reaction: L-threonine is first activated by ATP to form Thr-AMP and then transferred to the acceptor end of tRNA(Thr). Also edits incorrectly charged L-seryl-tRNA(Thr). The chain is Threonine--tRNA ligase from Chlamydia caviae (strain ATCC VR-813 / DSM 19441 / 03DC25 / GPIC) (Chlamydophila caviae).